The primary structure comprises 359 residues: Protein-glutamate methylesterase/protein-glutamine glutaminase 2 (359 aa).

A Response regulatory domain is found at Lys-6–Asp-123. Residue Asp-57 is modified to 4-aspartylphosphate. Residues Glu-167–Cys-359 enclose the CheB-type methylesterase domain. Residues Ser-179, His-205, and Asp-301 contribute to the active site.

This sequence belongs to the CheB family. Post-translationally, phosphorylated by CheA. Phosphorylation of the N-terminal regulatory domain activates the methylesterase activity.

It is found in the cytoplasm. It catalyses the reaction [protein]-L-glutamate 5-O-methyl ester + H2O = L-glutamyl-[protein] + methanol + H(+). The catalysed reaction is L-glutaminyl-[protein] + H2O = L-glutamyl-[protein] + NH4(+). Functionally, involved in chemotaxis. Part of a chemotaxis signal transduction system that modulates chemotaxis in response to various stimuli. Catalyzes the demethylation of specific methylglutamate residues introduced into the chemoreceptors (methyl-accepting chemotaxis proteins or MCP) by CheR. Also mediates the irreversible deamidation of specific glutamine residues to glutamic acid. The chain is Protein-glutamate methylesterase/protein-glutamine glutaminase 2 from Dechloromonas aromatica (strain RCB).